A 156-amino-acid chain; its full sequence is Small ribosomal subunit protein bS16 (156 aa).

The span at 85 to 120 shows a compositional bias: basic and acidic residues; it reads GESGAEGTLKSKSEKEAFVAPERDSVILPEEPKQEE. Positions 85–156 are disordered; that stretch reads GESGAEGTLK…APAEDAEKSE (72 aa). Positions 132–150 are enriched in acidic residues; the sequence is PAEEAAEAPAEEAAEAPAE.

Belongs to the bacterial ribosomal protein bS16 family.

The sequence is that of Small ribosomal subunit protein bS16 from Micrococcus luteus (strain ATCC 4698 / DSM 20030 / JCM 1464 / CCM 169 / CCUG 5858 / IAM 1056 / NBRC 3333 / NCIMB 9278 / NCTC 2665 / VKM Ac-2230) (Micrococcus lysodeikticus).